The chain runs to 388 residues: Succinate--CoA ligase [ADP-forming] subunit beta (388 aa).

Positions 9–244 (KQLFARSGLP…QSQEDPREAQ (236 aa)) constitute an ATP-grasp domain. ATP contacts are provided by residues Lys46, 53 to 55 (GRG), Glu99, Thr102, and Glu107. Residues Asn199 and Asp213 each coordinate Mg(2+). Substrate-binding positions include Asn264 and 321–323 (GIV).

The protein belongs to the succinate/malate CoA ligase beta subunit family. Heterotetramer of two alpha and two beta subunits. It depends on Mg(2+) as a cofactor.

The catalysed reaction is succinate + ATP + CoA = succinyl-CoA + ADP + phosphate. It carries out the reaction GTP + succinate + CoA = succinyl-CoA + GDP + phosphate. It participates in carbohydrate metabolism; tricarboxylic acid cycle; succinate from succinyl-CoA (ligase route): step 1/1. Succinyl-CoA synthetase functions in the citric acid cycle (TCA), coupling the hydrolysis of succinyl-CoA to the synthesis of either ATP or GTP and thus represents the only step of substrate-level phosphorylation in the TCA. The beta subunit provides nucleotide specificity of the enzyme and binds the substrate succinate, while the binding sites for coenzyme A and phosphate are found in the alpha subunit. The sequence is that of Succinate--CoA ligase [ADP-forming] subunit beta from Cronobacter sakazakii (strain ATCC BAA-894) (Enterobacter sakazakii).